The chain runs to 316 residues: Leucine-rich repeat-containing protein 73 (316 aa).

7 LRR repeats span residues 57–78 (SLAQLNLNLGVVSSPSRIKQLA), 86–106 (SIQSLFLHGSPLTDAGLALLN), 114–137 (ALVALDLGDCMLGDEAINLICGLL), 145–166 (GLKELTLSANPGITPKGWSRLA), 174–187 (QVRVLNLDYNPLGD), 202–223 (TLEVLDLEGTGLTNQSAQTLLD), and 231–250 (ALRSLVLAENSISPELQQQI). The tract at residues 257–296 (GEEEEEVAGGAGDTQEWERGREPAAHQRGSSSWMCPSDPS) is disordered. The segment covering 272–281 (EWERGREPAA) has biased composition (basic and acidic residues). Low complexity predominate over residues 286-296 (SSSWMCPSDPS).

This chain is Leucine-rich repeat-containing protein 73 (LRRC73), found in Homo sapiens (Human).